The sequence spans 107 residues: MTTGGFDLGGLDIGALLAQAQSVQNQLEAAQNQLAESNFEGTAGGGLVRATVTGTGELDALTIAPEALEDTDAETLADLVVAAVKDATGQARAMQQSLMPQMPSLGL.

This sequence belongs to the YbaB/EbfC family. In terms of assembly, homodimer.

The protein localises to the cytoplasm. The protein resides in the nucleoid. Functionally, binds to DNA and alters its conformation. May be involved in regulation of gene expression, nucleoid organization and DNA protection. The protein is Nucleoid-associated protein PPA0205 of Cutibacterium acnes (strain DSM 16379 / KPA171202) (Propionibacterium acnes).